We begin with the raw amino-acid sequence, 402 residues long: Na(+)/H(+) antiporter NhaA 2 (402 aa).

The next 11 helical transmembrane spans lie at 18 to 38 (AGGI…NTAL), 63 to 83 (ALLW…GLEV), 99 to 119 (SLPL…FYGI), 129 to 149 (GWAI…ALLG), 158 to 178 (ALLL…IAIF), 182 to 202 (GVEL…SAFG), 210 to 230 (IPYI…GVHA), 258 to 278 (ALHS…NAGV), 296 to 316 (IALG…WLAV), 329 to 349 (WLQV…SLFI), and 365 to 385 (IGVL…LVLG).

Belongs to the NhaA Na(+)/H(+) (TC 2.A.33) antiporter family.

The protein resides in the cell inner membrane. It catalyses the reaction Na(+)(in) + 2 H(+)(out) = Na(+)(out) + 2 H(+)(in). Its function is as follows. Na(+)/H(+) antiporter that extrudes sodium in exchange for external protons. The protein is Na(+)/H(+) antiporter NhaA 2 of Erythrobacter litoralis (strain HTCC2594).